The following is a 449-amino-acid chain: UDP-N-acetylmuramate--L-alanine ligase (449 aa).

ATP is bound at residue 121–127 (GAHGKSS).

It belongs to the MurCDEF family.

It is found in the cytoplasm. It catalyses the reaction UDP-N-acetyl-alpha-D-muramate + L-alanine + ATP = UDP-N-acetyl-alpha-D-muramoyl-L-alanine + ADP + phosphate + H(+). The protein operates within cell wall biogenesis; peptidoglycan biosynthesis. Functionally, cell wall formation. The sequence is that of UDP-N-acetylmuramate--L-alanine ligase from Helicobacter pylori (strain J99 / ATCC 700824) (Campylobacter pylori J99).